An 859-amino-acid chain; its full sequence is DNA-directed RNA polymerase subunit Rpo1C (859 aa).

Belongs to the RNA polymerase beta' chain family. Part of the RNA polymerase complex. This protein undergoes a protein self splicing that involves a post-translational excision of the intervening region (intein) followed by peptide ligation.

Its subcellular location is the cytoplasm. The catalysed reaction is RNA(n) + a ribonucleoside 5'-triphosphate = RNA(n+1) + diphosphate. Functionally, DNA-dependent RNA polymerase (RNAP) catalyzes the transcription of DNA into RNA using the four ribonucleoside triphosphates as substrates. Forms part of the jaw domain. This is DNA-directed RNA polymerase subunit Rpo1C from Methanocaldococcus jannaschii (strain ATCC 43067 / DSM 2661 / JAL-1 / JCM 10045 / NBRC 100440) (Methanococcus jannaschii).